Consider the following 83-residue polypeptide: Exodeoxyribonuclease 7 small subunit (83 aa).

It belongs to the XseB family. As to quaternary structure, heterooligomer composed of large and small subunits.

It is found in the cytoplasm. It catalyses the reaction Exonucleolytic cleavage in either 5'- to 3'- or 3'- to 5'-direction to yield nucleoside 5'-phosphates.. Functionally, bidirectionally degrades single-stranded DNA into large acid-insoluble oligonucleotides, which are then degraded further into small acid-soluble oligonucleotides. The sequence is that of Exodeoxyribonuclease 7 small subunit from Bradyrhizobium diazoefficiens (strain JCM 10833 / BCRC 13528 / IAM 13628 / NBRC 14792 / USDA 110).